The sequence spans 699 residues: TPR repeat-containing thioredoxin TTL1 (699 aa).

Residues 1–211 (MPKSVKPISE…SSSRSSSTVA (211 aa)) are disordered. Basic and acidic residues predominate over residues 9–20 (SESDKLSDHLRD). Residues Ser39 and Ser42 each carry the phosphoserine modification. Composition is skewed to low complexity over residues 52–70 (TTTT…SSGS) and 83–135 (RSNS…TSPA). Residues 166-182 (SGTGTYGHGSIMRGGGI) are compositionally biased toward gly residues. Residues 195–210 (NSPVNVGSSSRSSSTV) show a composition bias toward low complexity. TPR repeat units follow at residues 227–260 (SEEV…SPTN), 262–294 (AYRS…DPNY), 296–328 (RAHH…SDPM), 419–452 (AYIY…DPRC), 465–498 (VARA…DPCN), 499–532 (AILY…QPSY), and 534–566 (KPLL…LPHD). The Thioredoxin domain maps to 605–691 (QFKSAMNLPG…IVCPSKEVLE (87 aa)).

Expressed in the root elongation zone, stele, root cap, embryo vascular system, leaf axilar buds, silique abscission zone and guard cells.

In terms of biological role, involved in responses to osmotic stress and abscisic acid (ABA). May act as a positive regulator of ABA signaling during germination and seedling development under stress. In Arabidopsis thaliana (Mouse-ear cress), this protein is TPR repeat-containing thioredoxin TTL1 (TTL1).